A 113-amino-acid chain; its full sequence is UPF0102 protein SUN_0231 (113 aa).

This sequence belongs to the UPF0102 family.

The protein is UPF0102 protein SUN_0231 of Sulfurovum sp. (strain NBC37-1).